The chain runs to 299 residues: Non-structural protein V (299 aa).

Positions 40–94 (SDNPGQDRATCKEEEAGSSGLSKPCLSAIGSTEGGAPRIRGQGSGESDDDAETLG) are disordered. Positions 110-120 (YHVYDHSGEAV) are interaction with host STAT1. Residues 133-143 (SGLDGDSTLSG) are compositionally biased toward low complexity. Disordered stretches follow at residues 133–168 (SGLD…ITDR) and 204–229 (PKLG…TPIK). The span at 144–160 (GDDESENSDVDIGEPDT) shows a compositional bias: acidic residues. 8 residues coordinate Zn(2+): His232, Cys251, Cys255, Cys267, Cys269, Cys272, Cys276, and Cys279.

It belongs to the paramyxoviruses V protein family. Interacts with host IFIH1/MDA5 and DHX58/LGP2; these interactions are involved in the inhibition of the host type I interferon signaling pathway. Interacts with host TYK2; this interaction inhibits the type I interferon signaling pathway without affecting the type II pathway. Interacts with host IRF7; this interaction inhibits IRF7 translocation to the nucleus. Interacts with host CHUK. Interacts with host RELA/p65; this interaction inhibits the nuclear translocation of NF-KappaB. Interacts (via N-terminus) with host STAT1 and JAK1; these interactions inhibit STAT1 phosphorylation by Jak1 and thereby the type I interferon signaling pathway. Interacts (via C-terminus) with host STAT2; this interaction is involved in the inhibition of the host type I interferon signaling pathway. Forms a complex with host PPP1CA and PPP1CC; this interaction prevents dephosphorylation of host IFIH1/MDA5 and leads to the inhibition of the host type I interferon signaling pathway. Interacts with host IRF9; this interaction prevents the binding of IRF9 to STAT2 and thereby the type I interferon signaling pathway. Interacts with host RIGI regulatory protein (via CARDs domain) and host TRIM25 (via SPRY domain); these interactions prevent TRIM25-mediated ubiquitination of RIG-I and disrupts downstream RIG-I signaling.

The protein resides in the host cytoplasm. Functionally, plays an essential role in the inhibition of host immune response. Prevents the establishment of cellular antiviral state by blocking interferon-alpha/beta (IFN-alpha/beta) production and signaling pathway. Interacts with host IFIH1/MDA5 and DHX58/LGP2 to inhibit the transduction pathway involved in the activation of IFN-beta promoter, thus protecting the virus against cell antiviral state. Blocks the type I interferon signaling pathway by interacting with host TYK2 and thereby inhibiting downstream STAT1 and STAT2 phosphorylation. Blocks the type I interferon signaling pathway by disrupting the RIG-I signaling pathway. Moderately affects the type II interferon signaling. Prevents PP1alpha/gamma-mediated dephosphorylation of host IFIH1/MDA5 and thus blocks its activation. The sequence is that of Non-structural protein V (P/V) from Homo sapiens (Human).